Here is a 348-residue protein sequence, read N- to C-terminus: Histidinol-phosphate aminotransferase (348 aa).

An N6-(pyridoxal phosphate)lysine modification is found at K207.

This sequence belongs to the class-II pyridoxal-phosphate-dependent aminotransferase family. Histidinol-phosphate aminotransferase subfamily. Homodimer. Pyridoxal 5'-phosphate serves as cofactor.

It carries out the reaction L-histidinol phosphate + 2-oxoglutarate = 3-(imidazol-4-yl)-2-oxopropyl phosphate + L-glutamate. The protein operates within amino-acid biosynthesis; L-histidine biosynthesis; L-histidine from 5-phospho-alpha-D-ribose 1-diphosphate: step 7/9. The sequence is that of Histidinol-phosphate aminotransferase from Rippkaea orientalis (strain PCC 8801 / RF-1) (Cyanothece sp. (strain PCC 8801)).